The sequence spans 269 residues: 2-heptyl-3-hydroxy-4(1H)-quinolone dioxygenase (269 aa).

His-97 contacts substrate. Catalysis depends on His-246, which acts as the Proton donor/acceptor.

This sequence belongs to the AB hydrolase superfamily. In terms of assembly, monomer.

It carries out the reaction 2-heptyl-3-hydroxy-4(1H)-quinolone + O2 = N-octanoylanthranilate + CO + H(+). Functionally, ring-cleaving dioxygenase involved in the degradation pathway of the Pseudomonas aeruginosa quorum sensing signal molecules HHQ (2-heptyl-4-quinolone) and PQS (2-heptyl-3-hydroxy-4(1H)-quinolone) to anthranilate. Catalyzes the cleavage of PQS to form N-octanoylanthranilate and carbon monoxide. Thus, leads to the inactivation of PQS that plays a central role in the regulation of virulence factor production by P.aeruginosa, thereby quenching the production of antimicrobials, which may contribute to the competitiveness of M.abscessus in presence of P.aeruginosa. In vitro, can also use other 2-alkyl-3-hydroxy-4(1H)-quinolone (AHQ) substrates with shorter alkyl substituents at C2, but with lower efficiency. The sequence is that of 2-heptyl-3-hydroxy-4(1H)-quinolone dioxygenase from Mycobacteroides abscessus (strain ATCC 19977 / DSM 44196 / CCUG 20993 / CIP 104536 / JCM 13569 / NCTC 13031 / TMC 1543 / L948) (Mycobacterium abscessus).